A 102-amino-acid polypeptide reads, in one-letter code: PqqA binding protein (102 aa).

Belongs to the PqqD family. In terms of assembly, monomer. Interacts with PqqE.

Its pathway is cofactor biosynthesis; pyrroloquinoline quinone biosynthesis. Functions as a PqqA binding protein and presents PqqA to PqqE, in the pyrroloquinoline quinone (PQQ) biosynthetic pathway. This Rhodopseudomonas palustris (strain TIE-1) protein is PqqA binding protein.